Here is a 139-residue protein sequence, read N- to C-terminus: Small ribosomal subunit protein uS11 (139 aa).

Residues 1–13 (MAKQAAKGSAAAT) are compositionally biased toward low complexity. Residues 1–30 (MAKQAAKGSAAATKRQRGKRREKKNVPRGQ) are disordered. The segment covering 14–23 (KRQRGKRREK) has biased composition (basic residues).

The protein belongs to the universal ribosomal protein uS11 family. In terms of assembly, part of the 30S ribosomal subunit. Interacts with proteins S7 and S18. Binds to IF-3.

In terms of biological role, located on the platform of the 30S subunit, it bridges several disparate RNA helices of the 16S rRNA. Forms part of the Shine-Dalgarno cleft in the 70S ribosome. The polypeptide is Small ribosomal subunit protein uS11 (Roseiflexus sp. (strain RS-1)).